The following is a 41-amino-acid chain: Plantazolicin (41 aa).

The propeptide occupies 1 to 27 (MTQIKVPTALIASVHGEGQHLFEPMAA). Position 28 is an N2,N2-dimethylarginine (arginine 28). A cross-link (thiazole-4-carboxylic acid (Arg-Cys)) is located at residues 28–29 (RC). 2 consecutive cross-links (5-methyloxazole-4-carboxylic acid (Cys-Thr)) follow at residues 29-30 (CT) and 31-32 (CT). Positions 30-31 (TC) form a cross-link, thiazole-4-carboxylic acid (Thr-Cys). The segment at residues 32 to 33 (TT) is a cross-link (5-methyloxazole-4-carboxylic acid (Thr-Thr)). Positions 35–36 (IS) form a cross-link, oxazole-4-carboxylic acid (Ile-Ser). 3 consecutive cross-links (oxazole-4-carboxylic acid (Ser-Ser)) follow at residues 36–37 (SS), 37–38 (SS), and 38–39 (SS). Positions 39-40 (ST) form a cross-link, 5-methyloxazoline-4-carboxylic acid (Ser-Thr).

In terms of processing, maturation of thiazole and oxazole containing antibiotics involves the enzymatic condensation of a Cys, Ser or Thr with the alpha-carbonyl of the preceding amino acid to form a thioether or ether bond, then dehydration to form a double bond with the alpha-amino nitrogen. Thiazoline or oxazoline ring are dehydrogenated to form thiazole or oxazole rings. Post-translationally, 2 forms exist: plantazolicin A and plantazolicin B. The structural difference between them is a dimethylation at Arg-28 in plantazolicin A.

The protein resides in the secreted. It is found in the cell wall. Peptide antibiotic inhibiting growth of Gram-positive bacteria in the dimethylated form plantazolicin A. The desmethyl form plantazolicin B has no antibiotic activity. The mode of action appears to be disruption of cell walls and lysis of cells. Inhibits B.subtilis strain HB0042, B.megaterium strain 7A1 and B.anthracis (MIC=2-4 ug/ml). Weakly inhibits Gram-positive bacteria B.brevis strain ATCC 8246, B.subtilis strain 168, B.cereus strain ATCC 14579 and strain CU1065, B.licheniformis strain ATCC 9789, M.luteus, B.sphaericus, P.granivorans and S.pyogenes (MIC=128 ug/ml). Does not inhibit B.pumilus, P.polymyxa, Arthrobacter sp., S.aureus, vancomycin-resistant E.faecalis, L.monocytogenes, methicillin-resistant S.aureus or Gram-negative bacteria E.coli strain K12, K.terrigena, Pseudomonas sp. and E.carotovora. This chain is Plantazolicin, found in Bacillus velezensis (strain DSM 23117 / BGSC 10A6 / LMG 26770 / FZB42) (Bacillus amyloliquefaciens subsp. plantarum).